We begin with the raw amino-acid sequence, 283 residues long: NADPH-dependent 7-cyano-7-deazaguanine reductase (283 aa).

A substrate-binding site is contributed by 90–92; sequence IES. An NADPH-binding site is contributed by 92-93; it reads SK. Cysteine 191 functions as the Thioimide intermediate in the catalytic mechanism. Aspartate 198 acts as the Proton donor in catalysis. Residue 230-231 coordinates substrate; it reads HE. NADPH is bound at residue 259–260; the sequence is RG.

This sequence belongs to the GTP cyclohydrolase I family. QueF type 2 subfamily. As to quaternary structure, homodimer.

Its subcellular location is the cytoplasm. The enzyme catalyses 7-aminomethyl-7-carbaguanine + 2 NADP(+) = 7-cyano-7-deazaguanine + 2 NADPH + 3 H(+). It participates in tRNA modification; tRNA-queuosine biosynthesis. Functionally, catalyzes the NADPH-dependent reduction of 7-cyano-7-deazaguanine (preQ0) to 7-aminomethyl-7-deazaguanine (preQ1). This chain is NADPH-dependent 7-cyano-7-deazaguanine reductase, found in Tolumonas auensis (strain DSM 9187 / NBRC 110442 / TA 4).